The chain runs to 748 residues: Catalase-peroxidase (748 aa).

The segment at residues 96–229 (WHSAGTYRVA…LAAAHMGLIY (134 aa)) is a cross-link (tryptophyl-tyrosyl-methioninium (Trp-Tyr) (with M-255)). His-97 acts as the Proton acceptor in catalysis. Residues 229–255 (YVNPEGPDGNPDPIAAAKDIRTTFGRM) constitute a cross-link (tryptophyl-tyrosyl-methioninium (Tyr-Met) (with W-96)). Residue His-270 coordinates heme b.

It belongs to the peroxidase family. Peroxidase/catalase subfamily. As to quaternary structure, homodimer or homotetramer. Heme b serves as cofactor. Formation of the three residue Trp-Tyr-Met cross-link is important for the catalase, but not the peroxidase activity of the enzyme.

The protein resides in the cytoplasm. The catalysed reaction is H2O2 + AH2 = A + 2 H2O. It catalyses the reaction 2 H2O2 = O2 + 2 H2O. Bifunctional enzyme with both catalase and broad-spectrum peroxidase activity. Plays a crucial role in oxidative stress response during infection. Acts as an antigen and elicits antibody response in P.marneffei-infected AIDS patients, healthy people working in mycological laboratory, and healthy people in an endemic area. This is Catalase-peroxidase from Talaromyces marneffei (Penicillium marneffei).